We begin with the raw amino-acid sequence, 458 residues long: Jacalin-related lectin 22 (458 aa).

Jacalin-type lectin domains lie at 5–153 (YRKL…YFVL), 160–301 (LYKL…YFGP), and 311–453 (SKKL…TIVP).

The protein belongs to the jacalin lectin family. In terms of assembly, component of the PYK10 complex, at least composed of PYK10/BGLU23, BGLU21, BGLU22, JAL22, JAL23, PBP1/JAL30, PBP2/JAL31, JAL32, JAL33, JAL34, JAL35, GLL22 and GLL23.

Its function is as follows. Inhibitor-type lectin that may regulate the correct polymerization and activation of BGLU23/PYK10 upon tissue damage. The sequence is that of Jacalin-related lectin 22 (JAL22) from Arabidopsis thaliana (Mouse-ear cress).